A 465-amino-acid chain; its full sequence is Ras GTPase-activating protein-binding protein 1 (465 aa).

Residues 11–133 (VGREFVRQYY…FYVHNDIFRY (123 aa)) form the NTF2 domain. Residues Lys-36, Lys-50, Lys-59, Lys-64, Lys-76, and Lys-123 each participate in a glycyl lysine isopeptide (Lys-Gly) (interchain with G-Cter in ubiquitin) cross-link. Residues 142–224 (ITEPQEESEE…EPVLEETAPE (83 aa)) are acidic disordered region. Thr-143 carries the post-translational modification Phosphothreonine. 2 stretches are compositionally biased toward acidic residues: residues 145–157 (PQEE…EEPE) and 184–205 (EHLE…EQEP). A disordered region spans residues 145–242 (PQEESEEEVE…APADIAQTVQ (98 aa)). Ser-149 is subject to Phosphoserine. Ser-230, Ser-231, Ser-249, and Ser-252 each carry phosphoserine. The segment at 254-326 (TSKNLPPSGA…PVREAGEQGD (73 aa)) is disordered. Composition is skewed to basic and acidic residues over residues 296-306 (PQRDQRVREQR) and 317-326 (PVREAGEQGD). In terms of domain architecture, RRM spans 339–414 (HQLFIGNLPH…VRLNVEEKKT (76 aa)). Residues Lys-352 and Lys-356 each participate in a glycyl lysine isopeptide (Lys-Gly) (interchain with G-Cter in ubiquitin) cross-link. Position 372 is a phosphoserine (Ser-372). Lys-375 is covalently cross-linked (Glycyl lysine isopeptide (Lys-Gly) (interchain with G-Cter in ubiquitin)). Lys-375 is modified (N6-acetyllysine; alternate). Lys-375 is covalently cross-linked (Glycyl lysine isopeptide (Lys-Gly) (interchain with G-Cter in SUMO2); alternate). Lys-392 participates in a covalent cross-link: Glycyl lysine isopeptide (Lys-Gly) (interchain with G-Cter in ubiquitin); alternate. Residues 409-465 (VEEKKTRAAREGDRRDNRLRGPGGPRGGLGGGMRGPPRGGMVQKPGFGVGRSIAPRQ) form an RG-rich region region. Residues 412 to 427 (KKTRAAREGDRRDNRL) show a composition bias toward basic and acidic residues. The segment at 412–465 (KKTRAAREGDRRDNRLRGPGGPRGGLGGGMRGPPRGGMVQKPGFGVGRSIAPRQ) is disordered. Arg-428 carries the post-translational modification Asymmetric dimethylarginine. Gly residues predominate over residues 429–446 (GPGGPRGGLGGGMRGPPR). The residue at position 434 (Arg-434) is an Asymmetric dimethylarginine; alternate. Arg-434, Arg-446, Arg-459, and Arg-464 each carry omega-N-methylarginine; alternate. Arg-459 carries the post-translational modification Dimethylated arginine; alternate.

Homodimer and oligomer. Component of a TAU mRNP complex, at least composed of IGF2BP1, ELAVL4 and G3BP1. Binds to the SH3 domain of Ras GTPase-activating protein (RASA1) in proliferating cells. No interaction in quiescent cells. Interacts (via NTF2 domain) with USP10; inhibiting stress granule formation by lowering G3BP1 valence. Interacts (via NTF2 domain) with CAPRIN1; promoting stress granule formation by lowering the saturation-concentration of G3BP1. Interacts (via NTF2 domain) with UBAP2L; promoting stress granule formation. Associates (via RG-rich region) with 40S ribosome subunits. Interacts with RPTOR and SPAG5; this complex is increased by oxidative stress. Interacts with ATXN2L. Interacts with STYXL1. Interacts with CGAS (via N-terminus); this interaction promotes the DNA-binding and activation of CGAS. Interacts (via C-terminus) with RIGI. Interacts with PABPC1. Interacts with QKI (isoforms QKI6 and QKI7); directing N(7)-methylguanine-containing mRNAs to stress granules. Requires Mg(2+) as cofactor. Post-translationally, phosphorylation of the acidic disordered region regulates stress granule assembly. RASA1-dependent phosphorylation of Ser-149 induces a conformational change that prevents self-association. Dephosphorylation after HRAS activation is required for stress granule assembly. Ser-149 phosphorylation induces partial nuclear localization. In terms of processing, arg-435 is dimethylated, probably to asymmetric dimethylarginine. Ubiquitinated by TRIM21 via 'Lys-63'-linked polyubiquitination in the NTF2 domain in response to heat shock, leading to stress granule disassembly: ubiquitination promotes interaction with the FAF2 adapter, followed by interaction with VCP, which extracts G3BP1 from stress granules, leading to stress granule disassembly. In case of prolonged stress, ubiquitination by TRIM21 leads to autophagy-dependent degradation of G3BP1 via recruitment of ubiquitinated G3BP1 by SQSTM1 and/or CALCOCO2 to autophagosomes.

It is found in the cytoplasm. The protein resides in the cytosol. The protein localises to the perikaryon. Its subcellular location is the stress granule. It localises to the nucleus. It carries out the reaction ATP + H2O = ADP + phosphate + H(+). Its activity is regulated as follows. Under physiological conditions, G3BP1 adopts a compact state that is stabilized by intramolecular interactions between the RG-rich and the acidic regions that inhibit phase separation. Upon stress, polysomes disassemble and mRNAs are released in an unfolded protein-free state. Binding of unfolded mRNA to G3BP1 outcompetes the intramolecular interactions and RNA-bound G3BP1 adopts an expanded conformation in which the RG-rich region becomes exposed to engage in protein-protein and protein-RNA interactions, allowing physical cross-linking of RNA molecules to form protein-RNA condensates, leading to liquid-liquid phase separation (LLPS). Protein involved in various processes, such as stress granule formation and innate immunity. Plays an essential role in stress granule formation. Stress granules are membraneless compartments that store mRNAs and proteins, such as stalled translation pre-initiation complexes, in response to stress. Promotes formation of stress granules phase-separated membraneless compartment by undergoing liquid-liquid phase separation (LLPS) upon unfolded RNA-binding: functions as a molecular switch that triggers RNA-dependent LLPS in response to a rise in intracellular free RNA concentrations. Also acts as an ATP- and magnesium-dependent helicase: unwinds DNA/DNA, RNA/DNA, and RNA/RNA substrates with comparable efficiency. Acts unidirectionally by moving in the 5' to 3' direction along the bound single-stranded DNA. Unwinds preferentially partial DNA and RNA duplexes having a 17 bp annealed portion and either a hanging 3' tail or hanging tails at both 5'- and 3'-ends. Plays an essential role in innate immunity by promoting CGAS and RIGI activity. Participates in the DNA-triggered cGAS/STING pathway by promoting the DNA binding and activation of CGAS. Triggers the condensation of cGAS, a process probably linked to the formation of membrane-less organelles. Also enhances RIGI-induced type I interferon production probably by helping RIGI at sensing pathogenic RNA. May also act as a phosphorylation-dependent sequence-specific endoribonuclease in vitro: Cleaves exclusively between cytosine and adenine and cleaves MYC mRNA preferentially at the 3'-UTR. The polypeptide is Ras GTPase-activating protein-binding protein 1 (G3BP1) (Bos taurus (Bovine)).